Here is a 269-residue protein sequence, read N- to C-terminus: MSRIADTFAELQSKGRKALIPYVTAGFPFVDITPALMHGMVEAGADVIELGVPFSDPMADGPVIQKAGEKALALGVGLAQVLEMVRRFRLRNSTTPVVLMGYANPVERYEQRHGKGAFARDAGEAGVDGVLIVDYPPEECEQFAADLRGHGIDLIFLLAPTSTPERMQQVARVASGYVYYVSLKGVTGSGALDTAAVEAMLPRIREHVKVPVGVGFGIRDAATAQAIGRVADAVVIGSRIIQLIEDQPHEKVVGITVDFLRGVRKALDA.

Active-site proton acceptor residues include Glu-49 and Asp-60.

The protein belongs to the TrpA family. Tetramer of two alpha and two beta chains.

It carries out the reaction (1S,2R)-1-C-(indol-3-yl)glycerol 3-phosphate + L-serine = D-glyceraldehyde 3-phosphate + L-tryptophan + H2O. The protein operates within amino-acid biosynthesis; L-tryptophan biosynthesis; L-tryptophan from chorismate: step 5/5. Functionally, the alpha subunit is responsible for the aldol cleavage of indoleglycerol phosphate to indole and glyceraldehyde 3-phosphate. The chain is Tryptophan synthase alpha chain from Acidovorax sp. (strain JS42).